We begin with the raw amino-acid sequence, 130 residues long: Small ribosomal subunit protein uS11 (130 aa).

The protein belongs to the universal ribosomal protein uS11 family. Part of the 30S ribosomal subunit. Interacts with proteins S7 and S18. Binds to IF-3.

In terms of biological role, located on the platform of the 30S subunit, it bridges several disparate RNA helices of the 16S rRNA. Forms part of the Shine-Dalgarno cleft in the 70S ribosome. This Prochlorococcus marinus (strain MIT 9211) protein is Small ribosomal subunit protein uS11.